Reading from the N-terminus, the 508-residue chain is MGLPWYRVHTVVLNDPGRLLSVHIMHTALVSGWAGSMALYELAVFDPSDPVLDPMWRQGMFVIPFMTRLGITNSWGGWSITGGTITNPGIWSYEGVAGAHIVFSGLCFLAAIWHWVYWDLEIFCDERTGKPSLDLPKIFGIHLFLSGVTCFGFGAFHVTGLYGPGIWVSDPYGLTGKVQSVNPAWGTEGFDPFVPGGIASHHIAAGTLGILAGLFHLSVRPPQRLYKGLRMGNIETVLSSSIAAVFFAAFVVAGTMWYGSATTPIELFGPTRYQWDQGYFQQEIYRRVGAGLAENLSLSEAWSKIPEKLAFYDYIGNNPAKGGLFRAGSMDNGDGIAVGWLGHPIFRDKEGHELFVRRMPTFFETFPVVLVDGDGIVRADVPFRRAESKYSVEQVGVTVEFYGGELNGVSYGDPATVKKYARRAQLGEIFELDRATLKSDGVFRSSPRGWFTFGHATFALLFFFGHIWHGARTLFRDVFAGIDPDLDAQVEFGTFQKLGDPTTRRQVV.

The next 6 membrane-spanning stretches (helical) occupy residues 21 to 36 (SVHI…WAGS), 101 to 115 (IVFS…IWHW), 140 to 156 (GIHL…FGAF), 203 to 218 (IAAG…FHLS), 237 to 252 (VLSS…AFVV), and 457 to 472 (TFAL…HGAR).

Belongs to the PsbB/PsbC family. PsbB subfamily. In terms of assembly, PSII is composed of 1 copy each of membrane proteins PsbA, PsbB, PsbC, PsbD, PsbE, PsbF, PsbH, PsbI, PsbJ, PsbK, PsbL, PsbM, PsbT, PsbX, PsbY, PsbZ, Psb30/Ycf12, at least 3 peripheral proteins of the oxygen-evolving complex and a large number of cofactors. It forms dimeric complexes. Binds multiple chlorophylls. PSII binds additional chlorophylls, carotenoids and specific lipids. serves as cofactor.

Its subcellular location is the plastid. It localises to the chloroplast thylakoid membrane. In terms of biological role, one of the components of the core complex of photosystem II (PSII). It binds chlorophyll and helps catalyze the primary light-induced photochemical processes of PSII. PSII is a light-driven water:plastoquinone oxidoreductase, using light energy to abstract electrons from H(2)O, generating O(2) and a proton gradient subsequently used for ATP formation. This chain is Photosystem II CP47 reaction center protein, found in Drimys granadensis.